The following is an 83-amino-acid chain: Evasin P1090 (83 aa).

An N-terminal signal peptide occupies residues 1 to 24; that stretch reads MEVKIFAFLQIAVLIAFSLHLASA. Intrachain disulfides connect cysteine 44-cysteine 63, cysteine 48-cysteine 65, and cysteine 59-cysteine 76. N-linked (GlcNAc...) asparagine glycosylation is present at asparagine 47. The N-linked (GlcNAc...) asparagine glycan is linked to asparagine 70.

It localises to the secreted. Salivary chemokine-binding protein which binds to host chemokines CXCL1, CXCL2, CXCL3, CXCL5, CXCL6, CXCL10, CXCL11 and CXCL13. This Ixodes ricinus (Common tick) protein is Evasin P1090.